Reading from the N-terminus, the 302-residue chain is Protein KTI12 homolog (302 aa).

ATP is bound at residue 8–15 (GQPCSGKS). Positions 260–273 (LRRTFVKLMGQSSL) are calmodulin-binding.

Belongs to the KTI12 family. Interacts with the elongator complex. Binds to calmodulin in a calcium-dependent manner. As to expression, expressed in roots, hypocotyls, cotyledons, shoot apices, stems, inflorescence apices, leaves and flowers.

It is found in the cytoplasm. The protein localises to the nucleus. Elongator complex-associated factor that is not a structural subunit but rather transiently contacts the complex. Regulates both meristem activity and organ growth; acts as a positive regulator of adaxial leaf patterning by modulating both cell division and differentiation. Required for an early step in synthesis of 5-carbamoylmethyl (ncm5) groups present on uridines (ncm5U) at the wobble position in tRNA. The chain is Protein KTI12 homolog from Arabidopsis thaliana (Mouse-ear cress).